Consider the following 70-residue polypeptide: U-scoloptoxin(04)-Er3a (70 aa).

The first 24 residues, 1–24, serve as a signal peptide directing secretion; sequence MAAIRNLLILTMLLIVCVSWNADA.

This sequence belongs to the scoloptoxin-04 family. Contains 2 disulfide bonds. Expressed by the venom gland.

It localises to the secreted. This chain is U-scoloptoxin(04)-Er3a, found in Ethmostigmus rubripes (Giant centipede).